Here is a 247-residue protein sequence, read N- to C-terminus: DNA polymerase sliding clamp (247 aa).

The protein belongs to the PCNA family. In terms of assembly, homotrimer. The subunits circularize to form a toroid; DNA passes through its center. Replication factor C (RFC) is required to load the toroid on the DNA.

Its function is as follows. Sliding clamp subunit that acts as a moving platform for DNA processing. Responsible for tethering the catalytic subunit of DNA polymerase and other proteins to DNA during high-speed replication. The chain is DNA polymerase sliding clamp from Methanoregula boonei (strain DSM 21154 / JCM 14090 / 6A8).